Reading from the N-terminus, the 670-residue chain is Meiotic sister-chromatid recombination protein 6, mitochondrial (670 aa).

The N-terminal 27 residues, 1–27 (MLFSRASKIRVSQLMRRLQSTAVGRAA), are a transit peptide targeting the mitochondrion.

It localises to the mitochondrion. In terms of biological role, may be involved in the control of meiotic sister-chromatid recombination. This Eremothecium gossypii (strain ATCC 10895 / CBS 109.51 / FGSC 9923 / NRRL Y-1056) (Yeast) protein is Meiotic sister-chromatid recombination protein 6, mitochondrial (MSC6).